The sequence spans 506 residues: Putative amidase (506 aa).

Catalysis depends on charge relay system residues Lys-121 and Ser-196. Catalysis depends on Ser-220, which acts as the Acyl-ester intermediate.

The protein belongs to the amidase family.

The enzyme catalyses a monocarboxylic acid amide + H2O = a monocarboxylate + NH4(+). This is Putative amidase from Synechocystis sp. (strain ATCC 27184 / PCC 6803 / Kazusa).